The sequence spans 256 residues: uncharacterized protein (256 aa).

It belongs to the glycosyltransferase 2 family.

This is an uncharacterized protein from Acanthamoeba polyphaga mimivirus (APMV).